A 565-amino-acid chain; its full sequence is Dihydroxy-acid dehydratase (565 aa).

Mg(2+) is bound at residue Asp-80. Cys-121 is a binding site for [2Fe-2S] cluster. Mg(2+) is bound by residues Asp-122 and Lys-123. Lys-123 carries the post-translational modification N6-carboxylysine. Cys-194 serves as a coordination point for [2Fe-2S] cluster. Glu-447 is a binding site for Mg(2+). Ser-473 serves as the catalytic Proton acceptor.

It belongs to the IlvD/Edd family. In terms of assembly, homodimer. It depends on [2Fe-2S] cluster as a cofactor. The cofactor is Mg(2+).

It carries out the reaction (2R)-2,3-dihydroxy-3-methylbutanoate = 3-methyl-2-oxobutanoate + H2O. The enzyme catalyses (2R,3R)-2,3-dihydroxy-3-methylpentanoate = (S)-3-methyl-2-oxopentanoate + H2O. The protein operates within amino-acid biosynthesis; L-isoleucine biosynthesis; L-isoleucine from 2-oxobutanoate: step 3/4. Its pathway is amino-acid biosynthesis; L-valine biosynthesis; L-valine from pyruvate: step 3/4. In terms of biological role, functions in the biosynthesis of branched-chain amino acids. Catalyzes the dehydration of (2R,3R)-2,3-dihydroxy-3-methylpentanoate (2,3-dihydroxy-3-methylvalerate) into 2-oxo-3-methylpentanoate (2-oxo-3-methylvalerate) and of (2R)-2,3-dihydroxy-3-methylbutanoate (2,3-dihydroxyisovalerate) into 2-oxo-3-methylbutanoate (2-oxoisovalerate), the penultimate precursor to L-isoleucine and L-valine, respectively. The polypeptide is Dihydroxy-acid dehydratase (Pelodictyon phaeoclathratiforme (strain DSM 5477 / BU-1)).